Reading from the N-terminus, the 510-residue chain is Lysine--tRNA ligase (510 aa).

The Mg(2+) site is built by Glu420 and Glu427.

This sequence belongs to the class-II aminoacyl-tRNA synthetase family. Homodimer. Requires Mg(2+) as cofactor.

The protein resides in the cytoplasm. The catalysed reaction is tRNA(Lys) + L-lysine + ATP = L-lysyl-tRNA(Lys) + AMP + diphosphate. This is Lysine--tRNA ligase from Vibrio vulnificus (strain CMCP6).